Consider the following 706-residue polypeptide: Elongation factor G (706 aa).

The tr-type G domain occupies 8–295; the sequence is ELYRNFGIMA…AVIDYLPSPL (288 aa). Residues 17-24, 92-96, and 146-149 contribute to the GTP site; these read AHIDAGKT, DTPGH, and NKMD.

Belongs to the TRAFAC class translation factor GTPase superfamily. Classic translation factor GTPase family. EF-G/EF-2 subfamily.

It is found in the cytoplasm. Functionally, catalyzes the GTP-dependent ribosomal translocation step during translation elongation. During this step, the ribosome changes from the pre-translocational (PRE) to the post-translocational (POST) state as the newly formed A-site-bound peptidyl-tRNA and P-site-bound deacylated tRNA move to the P and E sites, respectively. Catalyzes the coordinated movement of the two tRNA molecules, the mRNA and conformational changes in the ribosome. The polypeptide is Elongation factor G (Ruegeria sp. (strain TM1040) (Silicibacter sp.)).